A 276-amino-acid chain; its full sequence is MIKPKIALTIAGTDPTGGAGVMADLKSFHSCGVYGMGVVTSIVAQNTLGVQHIHNLNHQWVDEQLDSVFNDTLPHAIKTGMIATADTMETIRHYLMQHESIPYVIDPVMLAKSGDSLMDNDTKQNLQHTLLPLADVVTPNLPEAEEITGLTIDSEEKIMQAGRIFINEIGSKGVIIKGGHSNDTDIAKDYLFTNEGVQTFENERFKTKHTHGTGCTFSAVITAELAKGRRLFEAVHKAKKFISMSIQYTPEIGRGRGPVNHFAYLKKEGLDDELSK.

Gln45 lines the 4-amino-5-hydroxymethyl-2-methylpyrimidine pocket.

It belongs to the ThiD family.

The catalysed reaction is 4-amino-5-hydroxymethyl-2-methylpyrimidine + ATP = 4-amino-2-methyl-5-(phosphooxymethyl)pyrimidine + ADP + H(+). It catalyses the reaction 4-amino-2-methyl-5-(phosphooxymethyl)pyrimidine + ATP = 4-amino-2-methyl-5-(diphosphooxymethyl)pyrimidine + ADP. It participates in cofactor biosynthesis; thiamine diphosphate biosynthesis; 4-amino-2-methyl-5-diphosphomethylpyrimidine from 5-amino-1-(5-phospho-D-ribosyl)imidazole: step 2/3. Its pathway is cofactor biosynthesis; thiamine diphosphate biosynthesis; 4-amino-2-methyl-5-diphosphomethylpyrimidine from 5-amino-1-(5-phospho-D-ribosyl)imidazole: step 3/3. Catalyzes the phosphorylation of hydroxymethylpyrimidine phosphate (HMP-P) to HMP-PP, and of HMP to HMP-P. The polypeptide is Hydroxymethylpyrimidine/phosphomethylpyrimidine kinase (thiD) (Staphylococcus aureus (strain MSSA476)).